Reading from the N-terminus, the 494-residue chain is Alpha-amylase-related protein (494 aa).

An N-terminal signal peptide occupies residues 1–20 (MIKFALALTLCLAGASLSLA). Gln-21 is modified (pyrrolidone carboxylic acid). Cys-48 and Cys-104 are disulfide-bonded. Ca(2+) is bound by residues Asn-118, Gln-169, and Asp-178. An intrachain disulfide couples Cys-157 to Cys-171. Arg-206 is a chloride binding site. Asp-208 functions as the Nucleophile in the catalytic mechanism. His-212 lines the Ca(2+) pocket. Glu-245 (proton donor) is an active-site residue. Chloride contacts are provided by Asn-308 and Arg-343. 3 cysteine pairs are disulfide-bonded: Cys-376–Cys-382, Cys-418–Cys-441, and Cys-448–Cys-460.

The protein belongs to the glycosyl hydrolase 13 family. Monomer. Ca(2+) is required as a cofactor. It depends on chloride as a cofactor.

The protein resides in the secreted. It carries out the reaction Endohydrolysis of (1-&gt;4)-alpha-D-glucosidic linkages in polysaccharides containing three or more (1-&gt;4)-alpha-linked D-glucose units.. This chain is Alpha-amylase-related protein (Amyrel), found in Drosophila bakoue (Fruit fly).